Here is a 351-residue protein sequence, read N- to C-terminus: S-adenosylmethionine:tRNA ribosyltransferase-isomerase (351 aa).

The protein belongs to the QueA family. In terms of assembly, monomer.

Its subcellular location is the cytoplasm. It carries out the reaction 7-aminomethyl-7-carbaguanosine(34) in tRNA + S-adenosyl-L-methionine = epoxyqueuosine(34) in tRNA + adenine + L-methionine + 2 H(+). The protein operates within tRNA modification; tRNA-queuosine biosynthesis. Its function is as follows. Transfers and isomerizes the ribose moiety from AdoMet to the 7-aminomethyl group of 7-deazaguanine (preQ1-tRNA) to give epoxyqueuosine (oQ-tRNA). The sequence is that of S-adenosylmethionine:tRNA ribosyltransferase-isomerase from Sphingopyxis alaskensis (strain DSM 13593 / LMG 18877 / RB2256) (Sphingomonas alaskensis).